The following is a 189-amino-acid chain: Thymidine kinase (189 aa).

ATP is bound by residues glycine 9–threonine 16 and aspartate 85–glutamine 88. Glutamate 86 acts as the Proton acceptor in catalysis. Zn(2+) contacts are provided by cysteine 143, cysteine 146, cysteine 180, and histidine 183.

The protein belongs to the thymidine kinase family. In terms of assembly, homotetramer.

Its subcellular location is the cytoplasm. The catalysed reaction is thymidine + ATP = dTMP + ADP + H(+). This Streptococcus pyogenes serotype M6 (strain ATCC BAA-946 / MGAS10394) protein is Thymidine kinase.